A 285-amino-acid polypeptide reads, in one-letter code: Probable endonuclease 4 (285 aa).

Positions 69, 109, 145, 179, 182, 216, 229, 231, and 261 each coordinate Zn(2+).

It belongs to the AP endonuclease 2 family. Requires Zn(2+) as cofactor.

The enzyme catalyses Endonucleolytic cleavage to 5'-phosphooligonucleotide end-products.. Functionally, endonuclease IV plays a role in DNA repair. It cleaves phosphodiester bonds at apurinic or apyrimidinic (AP) sites, generating a 3'-hydroxyl group and a 5'-terminal sugar phosphate. In Salmonella paratyphi C (strain RKS4594), this protein is Probable endonuclease 4.